A 225-amino-acid chain; its full sequence is Heptaprenylglyceryl phosphate synthase (225 aa).

Sn-glycerol 1-phosphate is bound at residue Lys6. Residues Asp8 and Thr34 each coordinate Mg(2+). Residues 153-158 (YVEYSG), Gly183, and 203-204 (GN) contribute to the sn-glycerol 1-phosphate site.

The protein belongs to the GGGP/HepGP synthase family. Group I subfamily. In terms of assembly, homodimer. It depends on Mg(2+) as a cofactor.

It catalyses the reaction sn-glycerol 1-phosphate + all-trans-heptaprenyl diphosphate = 3-heptaprenyl-sn-glycero-1-phosphate + diphosphate. It functions in the pathway membrane lipid metabolism; glycerophospholipid metabolism. Its function is as follows. Prenyltransferase that catalyzes in vivo the transfer of the heptaprenyl moiety of heptaprenyl pyrophosphate (HepPP; 35 carbon atoms) to the C3 hydroxyl of sn-glycerol-1-phosphate (G1P), producing heptaprenylglyceryl phosphate (HepGP). This reaction is an ether-bond-formation step in the biosynthesis of archaea-type G1P-based membrane lipids found in Bacillales. The chain is Heptaprenylglyceryl phosphate synthase from Listeria monocytogenes serotype 4a (strain HCC23).